We begin with the raw amino-acid sequence, 222 residues long: 4'-phosphopantetheinyl transferase Npt (222 aa).

3 residues coordinate Mg(2+): Asp-105, Glu-107, and Glu-147.

It belongs to the P-Pant transferase superfamily. Monomer. The cofactor is Mg(2+).

It carries out the reaction apo-[ACP] + CoA = holo-[ACP] + adenosine 3',5'-bisphosphate + H(+). Its function is as follows. Catalyzes the transfer of the 4'-phosphopantetheine moiety from coenzyme A to a serine residue in the acyl-carrier domain of carboxylic acid reductase Car, thus converting apo-Car to fully active holo-Car. Is probably also responsible for the activation of other proteins with phosphopantetheine attachment sites. The protein is 4'-phosphopantetheinyl transferase Npt (npt) of Nocardia iowensis.